Reading from the N-terminus, the 221-residue chain is Pre-rRNA-processing protein SRD1 (221 aa).

Polar residues predominate over residues 101-110; the sequence is SKNRVTSACN. Disordered stretches follow at residues 101-121 and 137-161; these read SKNRVTSACNSERRTTSQEAN and ASITKKYSKKTTSRPKREKRQTILP. Positions 142 to 155 are enriched in basic residues; that stretch reads KYSKKTTSRPKREK. The GATA-type zinc-finger motif lies at 168 to 193; sequence CSKCKDTWTIQWRSGPDQNRELCSPC. Residues 201–221 are disordered; the sequence is LKKENEKKRQAADKRIDRNNP. Residues 203–221 show a composition bias toward basic and acidic residues; it reads KENEKKRQAADKRIDRNNP.

The protein localises to the cytoplasm. The protein resides in the nucleus. Plays a direct or indirect role in pre-rRNA processing. In Saccharomyces cerevisiae (strain ATCC 204508 / S288c) (Baker's yeast), this protein is Pre-rRNA-processing protein SRD1 (SRD1).